Consider the following 406-residue polypeptide: Pyridinium-3,5-bisthiocarboxylic acid mononucleotide nickel insertion protein (406 aa).

The protein belongs to the LarC family.

It catalyses the reaction Ni(II)-pyridinium-3,5-bisthiocarboxylate mononucleotide = pyridinium-3,5-bisthiocarboxylate mononucleotide + Ni(2+). Its function is as follows. Involved in the biosynthesis of a nickel-pincer cofactor ((SCS)Ni(II) pincer complex). Binds Ni(2+), and functions in nickel delivery to pyridinium-3,5-bisthiocarboxylic acid mononucleotide (P2TMN), to form the mature cofactor. Is thus probably required for the activation of nickel-pincer cofactor-dependent enzymes. The chain is Pyridinium-3,5-bisthiocarboxylic acid mononucleotide nickel insertion protein from Akkermansia muciniphila (strain ATCC BAA-835 / DSM 22959 / JCM 33894 / BCRC 81048 / CCUG 64013 / CIP 107961 / Muc).